Consider the following 223-residue polypeptide: Deoxyribose-phosphate aldolase (223 aa).

Asp91 functions as the Proton donor/acceptor in the catalytic mechanism. Lys153 (schiff-base intermediate with acetaldehyde) is an active-site residue. Lys182 acts as the Proton donor/acceptor in catalysis.

It belongs to the DeoC/FbaB aldolase family. DeoC type 1 subfamily.

Its subcellular location is the cytoplasm. It carries out the reaction 2-deoxy-D-ribose 5-phosphate = D-glyceraldehyde 3-phosphate + acetaldehyde. The protein operates within carbohydrate degradation; 2-deoxy-D-ribose 1-phosphate degradation; D-glyceraldehyde 3-phosphate and acetaldehyde from 2-deoxy-alpha-D-ribose 1-phosphate: step 2/2. In terms of biological role, catalyzes a reversible aldol reaction between acetaldehyde and D-glyceraldehyde 3-phosphate to generate 2-deoxy-D-ribose 5-phosphate. The sequence is that of Deoxyribose-phosphate aldolase from Streptococcus agalactiae serotype V (strain ATCC BAA-611 / 2603 V/R).